A 228-amino-acid chain; its full sequence is Pyridoxal phosphate homeostasis protein (228 aa).

Lys35 carries the N6-(pyridoxal phosphate)lysine modification.

This sequence belongs to the pyridoxal phosphate-binding protein YggS/PROSC family.

In terms of biological role, pyridoxal 5'-phosphate (PLP)-binding protein, which is involved in PLP homeostasis. The sequence is that of Pyridoxal phosphate homeostasis protein from Aquifex aeolicus (strain VF5).